A 179-amino-acid polypeptide reads, in one-letter code: Large ribosomal subunit protein uL6 (179 aa).

It belongs to the universal ribosomal protein uL6 family. Part of the 50S ribosomal subunit.

Its function is as follows. This protein binds to the 23S rRNA, and is important in its secondary structure. It is located near the subunit interface in the base of the L7/L12 stalk, and near the tRNA binding site of the peptidyltransferase center. This Prochlorococcus marinus (strain MIT 9515) protein is Large ribosomal subunit protein uL6.